Reading from the N-terminus, the 144-residue chain is Large ribosomal subunit protein uL15 (144 aa).

The tract at residues 1–57 (MKLNDLSPAPGSRREKHRPGRGIGSGLGKTGGRGHKGQTSRSGGSIAPGFEGGQQPL) is disordered. The span at 21 to 31 (RGIGSGLGKTG) shows a compositional bias: gly residues.

The protein belongs to the universal ribosomal protein uL15 family. In terms of assembly, part of the 50S ribosomal subunit.

Binds to the 23S rRNA. The chain is Large ribosomal subunit protein uL15 from Pseudomonas entomophila (strain L48).